The primary structure comprises 935 residues: Protein translocase subunit SecA (935 aa).

ATP contacts are provided by residues Q90, 108–112 (GEGKT), and D504.

The protein belongs to the SecA family. In terms of assembly, monomer and homodimer. Part of the essential Sec protein translocation apparatus which comprises SecA, SecYEG and auxiliary proteins SecDF. Other proteins may also be involved.

It localises to the cell inner membrane. It is found in the cellular thylakoid membrane. The protein resides in the cytoplasm. It catalyses the reaction ATP + H2O + cellular proteinSide 1 = ADP + phosphate + cellular proteinSide 2.. Its function is as follows. Part of the Sec protein translocase complex. Interacts with the SecYEG preprotein conducting channel. Has a central role in coupling the hydrolysis of ATP to the transfer of proteins into and across the cell membrane, serving as an ATP-driven molecular motor driving the stepwise translocation of polypeptide chains across the membrane. Probably participates in protein translocation into and across both the cytoplasmic and thylakoid membranes in cyanobacterial cells. The protein is Protein translocase subunit SecA of Gloeothece citriformis (strain PCC 7424) (Cyanothece sp. (strain PCC 7424)).